Here is a 165-residue protein sequence, read N- to C-terminus: Thiol peroxidase (165 aa).

Residues 17–165 (PQVGEIVENF…NYEAALAVLA (149 aa)) form the Thioredoxin domain. Cys59 serves as the catalytic Cysteine sulfenic acid (-SOH) intermediate. Cysteines 59 and 93 form a disulfide.

The protein belongs to the peroxiredoxin family. Tpx subfamily. As to quaternary structure, homodimer.

It catalyses the reaction a hydroperoxide + [thioredoxin]-dithiol = an alcohol + [thioredoxin]-disulfide + H2O. Functionally, thiol-specific peroxidase that catalyzes the reduction of hydrogen peroxide and organic hydroperoxides to water and alcohols, respectively. Plays a role in cell protection against oxidative stress by detoxifying peroxides. The sequence is that of Thiol peroxidase from Haemophilus influenzae (strain ATCC 51907 / DSM 11121 / KW20 / Rd).